Consider the following 230-residue polypeptide: UPF0758 protein Daud_1467 (230 aa).

One can recognise an MPN domain in the interval 108–230; sequence TVRTPEEAAG…FTSLKLEGLF (123 aa). The Zn(2+) site is built by H179, H181, and D192. Positions 179–192 match the JAMM motif motif; sequence HNHPSGDPAPSPQD.

This sequence belongs to the UPF0758 family.

This chain is UPF0758 protein Daud_1467, found in Desulforudis audaxviator (strain MP104C).